A 20-amino-acid polypeptide reads, in one-letter code: Agglutinin beta-2 chain (20 aa).

A disordered region spans residues 1–20; the sequence is GRNGKSQSIIVGPWGDRVTN.

Belongs to the jacalin lectin family. Formed of four alpha chains and four beta chains.

Its function is as follows. D-galactose-specific lectin, binds the T-antigen structure Gal-beta1,3-GalNAc. The sequence is that of Agglutinin beta-2 chain from Maclura pomifera (Osage orange).